The chain runs to 320 residues: Protein PXR1 (320 aa).

Residues 1 to 11 (MGLAGPRKRTK) are compositionally biased toward basic residues. The disordered stretch occupies residues 1-24 (MGLAGPRKRTKISHDPNNTAWSRS). Polar residues predominate over residues 15–24 (DPNNTAWSRS). The G-patch domain occupies 25-79 (TSGYGHKIMSAQGWTPGSFLGASNAAHADHFTAGSAGHIRVILKDDNLGLGAKLR). Positions 152 to 298 (GEEVQTPQIS…MGRQFTRGRH (147 aa)) are disordered. Residues 169–182 (KRPKKARKKEKRRA) are compositionally biased toward basic residues. Basic and acidic residues-rich tracts occupy residues 203-214 (RKENKEKKKSSD), 243-256 (KDPEPSNTEVHDDS), and 269-288 (QESRYSAKNESIRKIREHRP).

The protein belongs to the PINX1 family.

Its subcellular location is the nucleus. It is found in the nucleolus. Functionally, involved in rRNA-processing at A0, A1 and A2 sites and negatively regulates telomerase. The protein is Protein PXR1 (PXR1) of Ajellomyces capsulatus (strain NAm1 / WU24) (Darling's disease fungus).